The primary structure comprises 400 residues: Argininosuccinate synthase (400 aa).

9 to 17 (AYSGGLDTS) contacts ATP. Y87 is an L-citrulline binding site. Residue G117 coordinates ATP. Residues T119, N123, and D124 each coordinate L-aspartate. N123 provides a ligand contact to L-citrulline. R127, S176, S185, E261, and Y273 together coordinate L-citrulline.

This sequence belongs to the argininosuccinate synthase family. Type 1 subfamily. In terms of assembly, homotetramer.

The protein resides in the cytoplasm. The catalysed reaction is L-citrulline + L-aspartate + ATP = 2-(N(omega)-L-arginino)succinate + AMP + diphosphate + H(+). Its pathway is amino-acid biosynthesis; L-arginine biosynthesis; L-arginine from L-ornithine and carbamoyl phosphate: step 2/3. This is Argininosuccinate synthase from Chlorobium phaeobacteroides (strain DSM 266 / SMG 266 / 2430).